The chain runs to 447 residues: Asparagine--tRNA ligase (447 aa).

The protein belongs to the class-II aminoacyl-tRNA synthetase family. In terms of assembly, homodimer.

The protein resides in the cytoplasm. The enzyme catalyses tRNA(Asn) + L-asparagine + ATP = L-asparaginyl-tRNA(Asn) + AMP + diphosphate + H(+). In Herpetosiphon aurantiacus (strain ATCC 23779 / DSM 785 / 114-95), this protein is Asparagine--tRNA ligase.